The primary structure comprises 91 residues: Small ribosomal subunit protein bS20 (91 aa).

Residues 1–18 (MPLHKSAEKRLRQSDRKN) are compositionally biased toward basic and acidic residues. Positions 1 to 25 (MPLHKSAEKRLRQSDRKNARNRARK) are disordered.

The protein belongs to the bacterial ribosomal protein bS20 family.

Binds directly to 16S ribosomal RNA. This is Small ribosomal subunit protein bS20 from Chlorobium phaeovibrioides (strain DSM 265 / 1930) (Prosthecochloris vibrioformis (strain DSM 265)).